The chain runs to 148 residues: MKYQKLENQESNWKWIYLIRKHREGENITRYEERSLQEAKAQELLESQNYPSQIEEWIKNHLSPALPIKLDQAIRARRKRFFNGEKQHTKKKSIDLEYAVWLRLSKYSRKMKMTLSETITYMIDERESKAQFENQMAAMKTSLKNLLK.

The protein belongs to the MatP family. As to quaternary structure, homodimer.

It localises to the cytoplasm. Functionally, required for spatial organization of the terminus region of the chromosome (Ter macrodomain) during the cell cycle. Prevents early segregation of duplicated Ter macrodomains during cell division. Binds specifically to matS, which is a 13 bp signature motif repeated within the Ter macrodomain. The chain is Macrodomain Ter protein from Haemophilus influenzae (strain 86-028NP).